The chain runs to 278 residues: 3-methyl-2-oxobutanoate hydroxymethyltransferase (278 aa).

Aspartate 44 and aspartate 83 together coordinate Mg(2+). Residues 44–45 (DS), aspartate 83, and lysine 112 each bind 3-methyl-2-oxobutanoate. Glutamate 114 provides a ligand contact to Mg(2+). Glutamate 181 (proton acceptor) is an active-site residue.

Belongs to the PanB family. In terms of assembly, homodecamer; pentamer of dimers. It depends on Mg(2+) as a cofactor.

The protein localises to the cytoplasm. The enzyme catalyses 3-methyl-2-oxobutanoate + (6R)-5,10-methylene-5,6,7,8-tetrahydrofolate + H2O = 2-dehydropantoate + (6S)-5,6,7,8-tetrahydrofolate. The protein operates within cofactor biosynthesis; (R)-pantothenate biosynthesis; (R)-pantoate from 3-methyl-2-oxobutanoate: step 1/2. Functionally, catalyzes the reversible reaction in which hydroxymethyl group from 5,10-methylenetetrahydrofolate is transferred onto alpha-ketoisovalerate to form ketopantoate. This is 3-methyl-2-oxobutanoate hydroxymethyltransferase from Roseiflexus sp. (strain RS-1).